The sequence spans 101 residues: Co-chaperonin GroES (101 aa).

This sequence belongs to the GroES chaperonin family. As to quaternary structure, heptamer of 7 subunits arranged in a ring. Interacts with the chaperonin GroEL.

Its subcellular location is the cytoplasm. Functionally, together with the chaperonin GroEL, plays an essential role in assisting protein folding. The GroEL-GroES system forms a nano-cage that allows encapsulation of the non-native substrate proteins and provides a physical environment optimized to promote and accelerate protein folding. GroES binds to the apical surface of the GroEL ring, thereby capping the opening of the GroEL channel. The sequence is that of Co-chaperonin GroES from Lawsonia intracellularis.